The following is a 258-amino-acid chain: Phosphoribosylaminoimidazole-succinocarboxamide synthase (258 aa).

It belongs to the SAICAR synthetase family.

It carries out the reaction 5-amino-1-(5-phospho-D-ribosyl)imidazole-4-carboxylate + L-aspartate + ATP = (2S)-2-[5-amino-1-(5-phospho-beta-D-ribosyl)imidazole-4-carboxamido]succinate + ADP + phosphate + 2 H(+). The protein operates within purine metabolism; IMP biosynthesis via de novo pathway; 5-amino-1-(5-phospho-D-ribosyl)imidazole-4-carboxamide from 5-amino-1-(5-phospho-D-ribosyl)imidazole-4-carboxylate: step 1/2. In Rhizorhabdus wittichii (strain DSM 6014 / CCUG 31198 / JCM 15750 / NBRC 105917 / EY 4224 / RW1) (Sphingomonas wittichii), this protein is Phosphoribosylaminoimidazole-succinocarboxamide synthase.